The chain runs to 184 residues: Endothelial cell-specific molecule 1 (184 aa).

Positions 1–19 (MKSVLLLTTLLVPAHLVAA) are cleaved as a signal peptide. The 79-residue stretch at 24–102 (YAVDCPQHCD…GEEFGICKDC (79 aa)) folds into the IGFBP N-terminal domain. 6 cysteine pairs are disulfide-bonded: Cys-28–Cys-51, Cys-32–Cys-53, Cys-37–Cys-54, Cys-43–Cys-57, Cys-65–Cys-83, and Cys-77–Cys-99. Ser-156 carries an O-linked (Xyl...) (chondroitin sulfate) serine glycan.

As to quaternary structure, monomer. Post-translationally, may contain intrachain disulfide bonds. In terms of processing, O-glycosylated; contains chondroitin sulfate and dermatan sulfate. As to expression, expressed in lung, on the vascular capillary network within alveolar walls, and also at lower level in kidney.

The protein resides in the secreted. Functionally, involved in angiogenesis; promotes angiogenic sprouting. May have potent implications in lung endothelial cell-leukocyte interactions. This chain is Endothelial cell-specific molecule 1 (ESM1), found in Homo sapiens (Human).